A 333-amino-acid polypeptide reads, in one-letter code: DNA repair and recombination protein RadA (333 aa).

An ATP-binding site is contributed by 127 to 134; sequence GEFGSGKT.

The protein belongs to the eukaryotic RecA-like protein family.

Its function is as follows. Involved in DNA repair and in homologous recombination. Binds and assemble on single-stranded DNA to form a nucleoprotein filament. Hydrolyzes ATP in a ssDNA-dependent manner and promotes DNA strand exchange between homologous DNA molecules. The chain is DNA repair and recombination protein RadA from Pyrobaculum arsenaticum (strain DSM 13514 / JCM 11321 / PZ6).